Reading from the N-terminus, the 317-residue chain is Proline-rich protein 2 (317 aa).

The N-terminal stretch at 1–16 is a signal peptide; sequence MLVVLFTVALLALSSA. Residues 15 to 317 form a disordered region; it reads SAQGPREELQ…PPQGRPQGPQ (303 aa). Residues 32–44 show a composition bias toward pro residues; the sequence is QRPPPSGSQPRPP. A glycan (N-linked (GlcNAc...) asparagine) is linked at Asn-46. Pro residues-rich tracts occupy residues 51–183 and 204–288; these read GPPP…PPAG and QSPP…PTQG. The span at 289 to 305 shows a compositional bias: low complexity; the sequence is PHPTGGPQQTPPLAGNP. Positions 306-317 are enriched in pro residues; it reads QGPPQGRPQGPQ.

The protein localises to the secreted. This Mus musculus (Mouse) protein is Proline-rich protein 2 (Prp2).